The chain runs to 289 residues: 4-diphosphocytidyl-2-C-methyl-D-erythritol kinase (289 aa).

Residue Lys-10 is part of the active site. 94–104 provides a ligand contact to ATP; that stretch reads PVAAGLAGGSS. Residue Asp-136 is part of the active site.

It belongs to the GHMP kinase family. IspE subfamily.

The enzyme catalyses 4-CDP-2-C-methyl-D-erythritol + ATP = 4-CDP-2-C-methyl-D-erythritol 2-phosphate + ADP + H(+). The protein operates within isoprenoid biosynthesis; isopentenyl diphosphate biosynthesis via DXP pathway; isopentenyl diphosphate from 1-deoxy-D-xylulose 5-phosphate: step 3/6. Catalyzes the phosphorylation of the position 2 hydroxy group of 4-diphosphocytidyl-2C-methyl-D-erythritol. This is 4-diphosphocytidyl-2-C-methyl-D-erythritol kinase from Bacillus cereus (strain G9842).